Here is a 143-residue protein sequence, read N- to C-terminus: Transcriptional regulator MraZ (143 aa).

2 consecutive SpoVT-AbrB domains span residues 5–47 (TYTP…SARE) and 76–119 (ASDE…DSES).

The protein belongs to the MraZ family. Forms oligomers.

Its subcellular location is the cytoplasm. The protein localises to the nucleoid. This is Transcriptional regulator MraZ from Micrococcus luteus (strain ATCC 4698 / DSM 20030 / JCM 1464 / CCM 169 / CCUG 5858 / IAM 1056 / NBRC 3333 / NCIMB 9278 / NCTC 2665 / VKM Ac-2230) (Micrococcus lysodeikticus).